An 80-amino-acid chain; its full sequence is Serine palmitoyltransferase-regulating protein TSC3 (80 aa).

Residues 54-74 (FDSFFLHVFFLTIFSLSFFGI) form a helical membrane-spanning segment.

In terms of assembly, interacts with the serine palmitoyltransferase complex LCB1-LCB2. Component of the SPOTS complex, at least composed of LCB1/2 (LCB1 and/or LCB2), ORM1/2 (ORM1 and/or ORM2), SAC1 and TSC3.

It localises to the endoplasmic reticulum membrane. Functionally, stimulates the activity of serine palmitoyltransferase (SPT), and thus plays a role in the biosynthesis of sphingolipids. The chain is Serine palmitoyltransferase-regulating protein TSC3 (TSC3) from Saccharomyces cerevisiae (strain ATCC 204508 / S288c) (Baker's yeast).